The following is a 158-amino-acid chain: NAD(P)H-quinone oxidoreductase subunit J, chloroplastic (158 aa).

Belongs to the complex I 30 kDa subunit family. In terms of assembly, NDH is composed of at least 16 different subunits, 5 of which are encoded in the nucleus.

Its subcellular location is the plastid. The protein localises to the chloroplast thylakoid membrane. It carries out the reaction a plastoquinone + NADH + (n+1) H(+)(in) = a plastoquinol + NAD(+) + n H(+)(out). The enzyme catalyses a plastoquinone + NADPH + (n+1) H(+)(in) = a plastoquinol + NADP(+) + n H(+)(out). Its function is as follows. NDH shuttles electrons from NAD(P)H:plastoquinone, via FMN and iron-sulfur (Fe-S) centers, to quinones in the photosynthetic chain and possibly in a chloroplast respiratory chain. The immediate electron acceptor for the enzyme in this species is believed to be plastoquinone. Couples the redox reaction to proton translocation, and thus conserves the redox energy in a proton gradient. In Ranunculus macranthus (Large buttercup), this protein is NAD(P)H-quinone oxidoreductase subunit J, chloroplastic.